The primary structure comprises 339 residues: Annexin A2 (339 aa).

Position 2 is an N-acetylserine (Ser2). Residues Ser2–Tyr24 are S100A10-binding site. At Tyr24 the chain carries Phosphotyrosine; by SRC. Ser26 is modified (phosphoserine; by PKC). Annexin repeat units follow at residues Phe33–Lys104 and Thr105–Lys176. Residue Lys49 is modified to N6-acetyllysine; alternate. Lys49 is covalently cross-linked (Glycyl lysine isopeptide (Lys-Gly) (interchain with G-Cter in SUMO1); alternate). A Glycyl lysine isopeptide (Lys-Gly) (interchain with G-Cter in SUMO2); alternate cross-link involves residue Lys49. Residue Lys152 is modified to N6-acetyllysine. Ser184 bears the Phosphoserine mark. Annexin repeat units follow at residues Glu189–Gln261 and Asn265–Gly336. Phosphotyrosine is present on Tyr199. Residue Lys227 is modified to N6-acetyllysine.

Belongs to the annexin family. Heterotetramer containing 2 light chains of S100A10/p11 and 2 heavy chains of ANXA2/p36. Interacts with ATP1B1. Interacts with DYSF. Interacts with COCH. Interacts (via repeat Annexin 1) with PCSK9 (via the C-terminal domain); the interaction inhibits the degradation of LDLR. Interacts with CEACAM1 (via the cytoplasmic domain); this interaction is regulated by phosphorylation of CEACAM1. Interacts with APPL2 and APPL1; targets APPL2 to endosomes and acting in parallel to RAB5A. Interacts with S100A4. May interact with UBAP2. Interacts with PLEKHG4B; this interaction is required for PLEKHG4B localization to cell-cell adhesions. In terms of assembly, (Microbial infection) Interacts with classical swine fever virus envelope glycoprotein E2. ISGylated.

It is found in the secreted. Its subcellular location is the extracellular space. The protein resides in the extracellular matrix. It localises to the basement membrane. The protein localises to the melanosome. Its function is as follows. Calcium-regulated membrane-binding protein whose affinity for calcium is greatly enhanced by anionic phospholipids. It binds two calcium ions with high affinity. May be involved in heat-stress response. Inhibits PCSK9-enhanced LDLR degradation, probably reduces PCSK9 protein levels via a translational mechanism but also competes with LDLR for binding with PCSK9. Binds to endosomes damaged by phagocytosis of particulate wear debris and participates in endosomal membrane stabilization, thereby limiting NLRP3 inflammasome activation. Required for endothelial cell surface plasmin generation and may support fibrinolytic surveillance and neoangiogenesis. In terms of biological role, (Microbial infection) May serve as a receptor for classical swine fever virus (CSFV). Promotes CSFV infection. This is Annexin A2 (ANXA2) from Sus scrofa (Pig).